A 288-amino-acid chain; its full sequence is tRNA dimethylallyltransferase (288 aa).

Position 17 to 24 (17 to 24 (GPTASGKS)) interacts with ATP. 19 to 24 (TASGKS) is a binding site for substrate.

Belongs to the IPP transferase family. As to quaternary structure, monomer. It depends on Mg(2+) as a cofactor.

The enzyme catalyses adenosine(37) in tRNA + dimethylallyl diphosphate = N(6)-dimethylallyladenosine(37) in tRNA + diphosphate. In terms of biological role, catalyzes the transfer of a dimethylallyl group onto the adenine at position 37 in tRNAs that read codons beginning with uridine, leading to the formation of N6-(dimethylallyl)adenosine (i(6)A). The polypeptide is tRNA dimethylallyltransferase (Ruegeria sp. (strain TM1040) (Silicibacter sp.)).